A 257-amino-acid polypeptide reads, in one-letter code: 1-(5-phosphoribosyl)-5-[(5-phosphoribosylamino)methylideneamino] imidazole-4-carboxamide isomerase (257 aa).

Asp8 functions as the Proton acceptor in the catalytic mechanism. Catalysis depends on Asp129, which acts as the Proton donor.

This sequence belongs to the HisA/HisF family.

It is found in the cytoplasm. It carries out the reaction 1-(5-phospho-beta-D-ribosyl)-5-[(5-phospho-beta-D-ribosylamino)methylideneamino]imidazole-4-carboxamide = 5-[(5-phospho-1-deoxy-D-ribulos-1-ylimino)methylamino]-1-(5-phospho-beta-D-ribosyl)imidazole-4-carboxamide. It participates in amino-acid biosynthesis; L-histidine biosynthesis; L-histidine from 5-phospho-alpha-D-ribose 1-diphosphate: step 4/9. In Crocosphaera subtropica (strain ATCC 51142 / BH68) (Cyanothece sp. (strain ATCC 51142)), this protein is 1-(5-phosphoribosyl)-5-[(5-phosphoribosylamino)methylideneamino] imidazole-4-carboxamide isomerase.